The chain runs to 1131 residues: MSSKKFNQVDKGRGMISENYIEPAFLLPDLIEIQRSSFRWFLEEGLIEELNSFSPITDYTGKLELHFLGHNYKLKEPKYSVEEAKRRDSTYAVQMYVPTRLLNKETGDIKEQEVFIGDLPLMTDRGTFIINGAERVIVNQIVRSPGVYYKSEIDKNGRRTYSASLIPNRGAWLKFETDRNDLVWVRIDKTRKLSAQVLLKALGLSDNEIFDALRHPEYFQKTIEKEGQFSEEEALMELYRKLRPGEPPTVLGGQQLLDSRFFDPKRYDLGRVGRYKLNKKLRLSVPDTVRVLTSGDILAAVDYLINLEYDIGSIDDIDHLGNRRVRSVGELLQNQVRVGLNRLERIIRERMTVSDAEVLTPASLVNPKPLVAAIKEFFGSSQLSQFMDQTNPLAELTHKRRLSALGPGGLTRERAGFAVRDIHPSHYGRICPIETPEGPNAGLIGSLATHARVNQYGFLETPFRPVENGRVRFDQPAAYMTADEEDDLRVAPGDIPVDENGYIIGPQVPVRYRQEFSTTTPEQVDYVAVSPVQIVSVATSMIPFLEHDDANRALMGSNMQRQAVPLLKPERPLVGTGLEAQGARDSGMVIVSRTDGDVVYVDATEIRVRVSGQLPTASGKSTDNGQLTSQKGQEIRYTVSKYQRSNQDTCLNQKPLVRIGERVVAGQVLADGSSTEGGELALGQNIVVAYMPWEGYNYEDAILISERLVQDDIYTSIHIEKYEIEARQTKLGPEEITREIPNVGEDALRQLDEQGIIRIGAWVEAGDILVGKVTPKGESDQPPEEKLLRAIFGEKARDVRDNSLRVPNGEKGRVVDVRLFTREQGDELPPGANMVVRVYVAQKRKIQVGDKMAGRHGNKGIISRILPIEDMPYLPDGSPVDIVLNPLGVPSRMNVGQVFECLLGWAGHTLGVRFKITPFDEMYGEESSRRIVHGKLQEARDETGKDWVYNPDDPGKIMVYDGRTGEAFDRPVTIGVAYMLKLVHLVDDKIHARSTGPYSLVTQQPLGGKAQQGGQRFGEMEVWALEAFGAAYTLQELLTVKSDDMQGRNEALNAIVKGKAIPRPGTPESFKVLMRELQSLGLDIAVHKVETQADGSSLDVEVDLMADQLARRTPPRPTYESLSRESLDDDE.

Residues Q1108–E1131 form a disordered region. Positions L1122–E1131 are enriched in basic and acidic residues.

It belongs to the RNA polymerase beta chain family. In cyanobacteria the RNAP catalytic core is composed of 2 alpha, 1 beta, 1 beta', 1 gamma and 1 omega subunit. When a sigma factor is associated with the core the holoenzyme is formed, which can initiate transcription.

It carries out the reaction RNA(n) + a ribonucleoside 5'-triphosphate = RNA(n+1) + diphosphate. Functionally, DNA-dependent RNA polymerase catalyzes the transcription of DNA into RNA using the four ribonucleoside triphosphates as substrates. This chain is DNA-directed RNA polymerase subunit beta, found in Nostoc sp. (strain PCC 7120 / SAG 25.82 / UTEX 2576).